We begin with the raw amino-acid sequence, 70 residues long: MRAIISLFLISAMVFSMIQAVPEEEGLQLSEDERGGCLPHNRFCNALSGPRCCSGLKCKELSIWDSRCLG.

Residues 1-20 form the signal peptide; the sequence is MRAIISLFLISAMVFSMIQA. A propeptide spanning residues 21–34 is cleaved from the precursor; sequence VPEEEGLQLSEDER. 3 cysteine pairs are disulfide-bonded: Cys37-Cys53, Cys44-Cys58, and Cys52-Cys68. Residue Leu69 is modified to Leucine amide.

This sequence belongs to the neurotoxin 01 (U2-agtx) family. Expressed by the venom gland.

Its subcellular location is the secreted. Insect active toxin causing rapid but reversible paralysis in crickets. No activity shown in mammals. Suppresses the excitatory postsynaptic potentials evoked in lobster neuromuscular synaptic preparations, possibly by blocking the presynaptic calcium channel. Induces instantaneous reversible paralysis when injected into crickets. Does not show effect on mammalian Cav2.1/CACNA1A, Cav2.2/CACNA1B and Cav2.3/CACNA1E. The sequence is that of U2-agatoxin-Ao1a from Agelena orientalis (Funnel-web spider).